The chain runs to 129 residues: Large ribosomal subunit protein bL12 (129 aa).

Belongs to the bacterial ribosomal protein bL12 family. In terms of assembly, homodimer. Part of the ribosomal stalk of the 50S ribosomal subunit. Forms a multimeric L10(L12)X complex, where L10 forms an elongated spine to which 2 to 4 L12 dimers bind in a sequential fashion. Binds GTP-bound translation factors.

Forms part of the ribosomal stalk which helps the ribosome interact with GTP-bound translation factors. Is thus essential for accurate translation. This Mycobacteroides abscessus (strain ATCC 19977 / DSM 44196 / CCUG 20993 / CIP 104536 / JCM 13569 / NCTC 13031 / TMC 1543 / L948) (Mycobacterium abscessus) protein is Large ribosomal subunit protein bL12.